The chain runs to 345 residues: Dense granule protein 4 (345 aa).

Positions 1–20 are cleaved as a signal peptide; it reads MQGTWFSLFVVVMVSHLACG. Positions 227–251 are enriched in polar residues; the sequence is SVSVSTEDSGLTGVKDSSSSESTVT. The segment at 227–271 is disordered; the sequence is SVSVSTEDSGLTGVKDSSSSESTVTPADEAASESEEGDKTSRKSK. A helical transmembrane segment spans residues 276–296; it reads ILTGLGVAATLAAAAAAAKAV. Residues 298–345 are disordered; sequence GFGGTRTSTAPAEAGKTELDDGYRPPPFNPRPSPYAELLKDLERMRKE. Residues 321–330 show a composition bias toward pro residues; the sequence is RPPPFNPRPS. Positions 335-345 are enriched in basic and acidic residues; it reads LLKDLERMRKE.

In terms of processing, O-glycosylated.

The protein localises to the secreted. It is found in the parasitophorous vacuole lumen. The protein resides in the parasitophorous vacuole membrane. Its subcellular location is the cytoplasmic vesicle. It localises to the secretory vesicle. Its function is as follows. Major granular component involved in excreted-secreted antigen (ESA) immunity. The polypeptide is Dense granule protein 4 (GRA4) (Toxoplasma gondii).